We begin with the raw amino-acid sequence, 565 residues long: Oxygen-dependent choline dehydrogenase (565 aa).

An FAD-binding site is contributed by 6 to 35 (DYIIIGAGSAGNVLATRLTEDADVSVLLLE). Histidine 475 acts as the Proton acceptor in catalysis. The interval 541 to 565 (RSNAPYFVAGERPVRGQPQRAVSAA) is disordered.

Belongs to the GMC oxidoreductase family. Requires FAD as cofactor.

It catalyses the reaction choline + A = betaine aldehyde + AH2. The catalysed reaction is betaine aldehyde + NAD(+) + H2O = glycine betaine + NADH + 2 H(+). It participates in amine and polyamine biosynthesis; betaine biosynthesis via choline pathway; betaine aldehyde from choline (cytochrome c reductase route): step 1/1. Functionally, involved in the biosynthesis of the osmoprotectant glycine betaine. Catalyzes the oxidation of choline to betaine aldehyde and betaine aldehyde to glycine betaine at the same rate. The chain is Oxygen-dependent choline dehydrogenase from Ectopseudomonas mendocina (strain ymp) (Pseudomonas mendocina).